Consider the following 316-residue polypeptide: tRNA dimethylallyltransferase (316 aa).

Gly-17–Thr-24 contacts ATP. Thr-19 to Thr-24 contributes to the substrate binding site. Interaction with substrate tRNA stretches follow at residues Asp-42 to Leu-45, Gln-166 to Arg-170, and Arg-247 to Arg-252.

This sequence belongs to the IPP transferase family. As to quaternary structure, monomer. It depends on Mg(2+) as a cofactor.

The enzyme catalyses adenosine(37) in tRNA + dimethylallyl diphosphate = N(6)-dimethylallyladenosine(37) in tRNA + diphosphate. Catalyzes the transfer of a dimethylallyl group onto the adenine at position 37 in tRNAs that read codons beginning with uridine, leading to the formation of N6-(dimethylallyl)adenosine (i(6)A). This chain is tRNA dimethylallyltransferase, found in Erwinia tasmaniensis (strain DSM 17950 / CFBP 7177 / CIP 109463 / NCPPB 4357 / Et1/99).